We begin with the raw amino-acid sequence, 309 residues long: HPr kinase/phosphorylase (309 aa).

Active-site residues include His-138 and Lys-159. 153–160 (GASGIGKS) contributes to the ATP binding site. Ser-160 is a binding site for Mg(2+). Catalysis depends on Asp-177, which acts as the Proton acceptor; for phosphorylation activity. Proton donor; for dephosphorylation activity. An important for the catalytic mechanism of both phosphorylation and dephosphorylation region spans residues 201 to 210 (IEIRGVGIID). Glu-202 contacts Mg(2+). The active site involves Arg-243. Positions 264–269 (PVKTGR) are important for the catalytic mechanism of dephosphorylation.

The protein belongs to the HPrK/P family. In terms of assembly, homohexamer. The cofactor is Mg(2+).

It catalyses the reaction [HPr protein]-L-serine + ATP = [HPr protein]-O-phospho-L-serine + ADP + H(+). The catalysed reaction is [HPr protein]-O-phospho-L-serine + phosphate + H(+) = [HPr protein]-L-serine + diphosphate. In terms of biological role, catalyzes the ATP- as well as the pyrophosphate-dependent phosphorylation of a specific serine residue in HPr, a phosphocarrier protein of the phosphoenolpyruvate-dependent sugar phosphotransferase system (PTS). HprK/P also catalyzes the pyrophosphate-producing, inorganic phosphate-dependent dephosphorylation (phosphorolysis) of seryl-phosphorylated HPr (P-Ser-HPr). The two antagonistic activities of HprK/P are regulated by several intracellular metabolites, which change their concentration in response to the absence or presence of rapidly metabolisable carbon sources (glucose, fructose, etc.) in the growth medium. Therefore, by controlling the phosphorylation state of HPr, HPrK/P is a sensor enzyme that plays a major role in the regulation of carbon metabolism and sugar transport: it mediates carbon catabolite repression (CCR), and regulates PTS-catalyzed carbohydrate uptake and inducer exclusion. In Lactococcus lactis subsp. lactis (strain IL1403) (Streptococcus lactis), this protein is HPr kinase/phosphorylase.